The chain runs to 186 residues: Ribosome-recycling factor (186 aa).

It belongs to the RRF family.

The protein localises to the cytoplasm. Responsible for the release of ribosomes from messenger RNA at the termination of protein biosynthesis. May increase the efficiency of translation by recycling ribosomes from one round of translation to another. The polypeptide is Ribosome-recycling factor (Bacteroides fragilis (strain ATCC 25285 / DSM 2151 / CCUG 4856 / JCM 11019 / LMG 10263 / NCTC 9343 / Onslow / VPI 2553 / EN-2)).